Consider the following 835-residue polypeptide: Phosphatidylinositol 4-kinase beta (835 aa).

Disordered stretches follow at residues 1 to 61 (MGDT…PLDV), 99 to 139 (SSAS…VRRR), and 267 to 341 (PSSQ…PVRL). Residues 19 to 59 (SPSTSTTSSLSLPSSPSSGPHPLTSSSPSTSEGLPTSSPPL) are compositionally biased toward low complexity. Residues 59 to 262 (LDVISEGLGE…GTKLRKLILS (204 aa)) form the PIK helical domain. Composition is skewed to basic and acidic residues over residues 125–134 (ISEEEVEPIK) and 267–276 (PSSQRIRREV). The span at 277–288 (PQPPPPYPPPLH) shows a compositional bias: pro residues. A compositionally biased stretch (polar residues) spans 311–332 (DATVSISLSSNLKRTASNPKVE). In terms of domain architecture, PI3K/PI4K catalytic spans 554–820 (EPWQEKVRRI…MVDGSMRSIT (267 aa)). The segment at 560–566 (VRRIREG) is G-loop. Residues 687 to 695 (QVKDRHNGN) form a catalytic loop region. The segment at 706–730 (HIDFGFILSSSPRNLGFETSAFKLT) is activation loop.

This sequence belongs to the PI3/PI4-kinase family. Type III PI4K subfamily. Mg(2+) is required as a cofactor. Mn(2+) serves as cofactor. Expressed in the inner ear otic vesicles.

The protein resides in the endomembrane system. It is found in the mitochondrion outer membrane. The protein localises to the rough endoplasmic reticulum membrane. The catalysed reaction is a 1,2-diacyl-sn-glycero-3-phospho-(1D-myo-inositol) + ATP = a 1,2-diacyl-sn-glycero-3-phospho-(1D-myo-inositol 4-phosphate) + ADP + H(+). Phosphorylates phosphatidylinositol (PI) in the first committed step in the production of the second messenger inositol-1,4,5,-trisphosphate (PIP). May play an important role the in inner ear development. The sequence is that of Phosphatidylinositol 4-kinase beta (pi4kb) from Danio rerio (Zebrafish).